Here is a 479-residue protein sequence, read N- to C-terminus: 5-hydroxytryptamine receptor 2B (479 aa).

Residues 1 to 55 (MASSYKMSEQSTISEHILQKTCDHLILTDRSGLKAESAAEEMKQTAENQGNTVHW) lie on the Extracellular side of the membrane. The chain crosses the membrane as a helical span at residues 56 to 78 (AALLIFAVIIPTIGGNILVILAV). Residues 79 to 89 (SLEKRLQYATN) are Cytoplasmic-facing. Residues 90–112 (YFLMSLAVADLLVGLFVMPIALL) form a helical membrane-spanning segment. Over 113–128 (TIMFEATWPLPLALCP) the chain is Extracellular. Cysteines 127 and 206 form a disulfide. Residues 129 to 150 (AWLFLDVLFSTASIMHLCAISL) traverse the membrane as a helical segment. The ergotamine site is built by Asp-134 and Thr-139. Residues 151–153 (DRY) carry the DRY motif; important for ligand-induced conformation changes motif. Topologically, residues 151–170 (DRYIAIKKPIQANQCNSRTT) are cytoplasmic. The chain crosses the membrane as a helical span at residues 171–191 (AFVKITVVWLISIGIAIPVPI). Topologically, residues 192-215 (KGIEADVVNAHNITCELTKDRFGS) are extracellular. An N-linked (GlcNAc...) asparagine glycan is attached at Asn-203. Leu-208 provides a ligand contact to ergotamine. A [DE]RFG motif; may stabilize a conformation that preferentially activates signaling via beta-arrestin family members motif is present at residues 211–214 (DRFG). Residues 216–238 (FMLFGSLAAFFAPLTIMIVTYFL) traverse the membrane as a helical segment. At 239–323 (TIHALRKKAY…TISNEQRASK (85 aa)) the chain is on the cytoplasmic side. The helical transmembrane segment at 324–344 (VLGIVFLFFLLMWCPFFITNV) threads the bilayer. Topologically, residues 345–359 (TLALCDSCNQTTLKT) are extracellular. A disulfide bond links Cys-349 and Cys-352. N-linked (GlcNAc...) asparagine glycosylation is present at Asn-353. The helical transmembrane segment at 360 to 381 (LLQIFVWVGYVSSGVNPLIYTL) threads the bilayer. Residues 375-379 (NPLIY) carry the NPxxY motif; important for ligand-induced conformation changes and signaling motif. Residues 382–479 (FNKTFREAFG…DKVEDQVSYI (98 aa)) are Cytoplasmic-facing. Residue Cys-396 is the site of S-palmitoyl cysteine attachment. The PDZ-binding motif lies at 477 to 479 (SYI).

Belongs to the G-protein coupled receptor 1 family. As to quaternary structure, interacts (via C-terminus) with MPDZ. In terms of tissue distribution, stomach fundus.

It is found in the cell membrane. The protein resides in the synapse. The protein localises to the synaptosome. Functionally, G-protein coupled receptor for 5-hydroxytryptamine (serotonin). Also functions as a receptor for various ergot alkaloid derivatives and psychoactive substances. Ligand binding causes a conformation change that triggers signaling via guanine nucleotide-binding proteins (G proteins) and modulates the activity of downstream effectors. HTR2B is coupled to G(q)/G(11) G alpha proteins and activates phospholipase C-beta, releasing diacylglycerol (DAG) and inositol 1,4,5-trisphosphate (IP3) second messengers that modulate the activity of phosphatidylinositol 3-kinase and promote the release of Ca(2+) ions from intracellular stores, respectively. Beta-arrestin family members inhibit signaling via G proteins and mediate activation of alternative signaling pathways. Plays a role in the regulation of dopamine and 5-hydroxytryptamine release, 5-hydroxytryptamine uptake and in the regulation of extracellular dopamine and 5-hydroxytryptamine levels, and thereby affects neural activity. May play a role in the perception of pain. Plays a role in the regulation of behavior, including impulsive behavior. Required for normal proliferation of embryonic cardiac myocytes and normal heart development. Protects cardiomyocytes against apoptosis. Plays a role in the adaptation of pulmonary arteries to chronic hypoxia. Plays a role in vasoconstriction. Required for normal osteoblast function and proliferation, and for maintaining normal bone density. Required for normal proliferation of the interstitial cells of Cajal in the intestine. The polypeptide is 5-hydroxytryptamine receptor 2B (Htr2b) (Rattus norvegicus (Rat)).